A 397-amino-acid chain; its full sequence is CCA-adding enzyme (397 aa).

Residues G27 and R30 each contribute to the ATP site. G27 and R30 together coordinate CTP. 2 residues coordinate Mg(2+): D40 and D42. ATP is bound by residues R111, D154, R157, R160, and R163. The CTP site is built by R111, D154, R157, R160, and R163.

This sequence belongs to the tRNA nucleotidyltransferase/poly(A) polymerase family. Bacterial CCA-adding enzyme type 3 subfamily. In terms of assembly, homodimer. It depends on Mg(2+) as a cofactor.

It catalyses the reaction a tRNA precursor + 2 CTP + ATP = a tRNA with a 3' CCA end + 3 diphosphate. It carries out the reaction a tRNA with a 3' CCA end + 2 CTP + ATP = a tRNA with a 3' CCACCA end + 3 diphosphate. Its function is as follows. Catalyzes the addition and repair of the essential 3'-terminal CCA sequence in tRNAs without using a nucleic acid template. Adds these three nucleotides in the order of C, C, and A to the tRNA nucleotide-73, using CTP and ATP as substrates and producing inorganic pyrophosphate. Has no poly(A) polymerase activity. This chain is CCA-adding enzyme, found in Bacillus subtilis (strain 168).